Consider the following 268-residue polypeptide: Nickel import ATP-binding protein NikE (268 aa).

Residues 4 to 252 (LNVSGLSHHY…SSDAGRVLQN (249 aa)) enclose the ABC transporter domain. ATP is bound at residue 45–52 (GRSGCGKS).

Belongs to the ABC transporter superfamily. Nickel importer (TC 3.A.1.5.3) family. The complex is composed of two ATP-binding proteins (NikD and NikE), two transmembrane proteins (NikB and NikC) and a solute-binding protein (NikA).

The protein resides in the cell inner membrane. The catalysed reaction is Ni(2+)(out) + ATP + H2O = Ni(2+)(in) + ADP + phosphate + H(+). Functionally, part of the ABC transporter complex NikABCDE involved in nickel import. Responsible for energy coupling to the transport system. The protein is Nickel import ATP-binding protein NikE of Shigella sonnei (strain Ss046).